Reading from the N-terminus, the 1486-residue chain is Chromosome partition protein MukB (1486 aa).

34-41 is an ATP binding site; it reads GGNGAGKS. 3 coiled-coil regions span residues 326 to 418, 444 to 480, and 509 to 603; these read LEAD…QYNQ, LETFQAKELEATEKMLSLEQKMSMAQTAHSQFEQAYQ, and RHLA…RAPV. The segment at 666-783 is flexible hinge; sequence PGGSEDQRLN…EVPLFGRAAR (118 aa). Coiled-coil stretches lie at residues 835-923, 977-1115, and 1209-1266; these read EAEI…AKLE, EMLS…TAKA, and VEAI…QNVS.

It belongs to the SMC family. MukB subfamily. As to quaternary structure, homodimerization via its hinge domain. Binds to DNA via its C-terminal region. Interacts, and probably forms a ternary complex, with MukE and MukF via its C-terminal region. The complex formation is stimulated by calcium or magnesium. Interacts with tubulin-related protein FtsZ.

It localises to the cytoplasm. The protein resides in the nucleoid. In terms of biological role, plays a central role in chromosome condensation, segregation and cell cycle progression. Functions as a homodimer, which is essential for chromosome partition. Involved in negative DNA supercoiling in vivo, and by this means organize and compact chromosomes. May achieve or facilitate chromosome segregation by condensation DNA from both sides of a centrally located replisome during cell division. The polypeptide is Chromosome partition protein MukB (Escherichia coli O17:K52:H18 (strain UMN026 / ExPEC)).